A 330-amino-acid polypeptide reads, in one-letter code: Ketol-acid reductoisomerase (NADP(+)) (330 aa).

In terms of domain architecture, KARI N-terminal Rossmann spans 1–181; it reads MNVYYEQDAD…GGAKAGVIET (181 aa). Residues 24 to 27, Arg47, Ser50, Ser52, and 82 to 85 each bind NADP(+); these read YGSQ and DQYQ. His107 is an active-site residue. Residue Gly133 participates in NADP(+) binding. In terms of domain architecture, KARI C-terminal knotted spans 182-327; the sequence is TIKNETETDL…AKLRNMMSWL (146 aa). 4 residues coordinate Mg(2+): Asp190, Glu194, Glu226, and Glu230. Position 251 (Ser251) interacts with substrate.

The protein belongs to the ketol-acid reductoisomerase family. Mg(2+) is required as a cofactor.

It catalyses the reaction (2R)-2,3-dihydroxy-3-methylbutanoate + NADP(+) = (2S)-2-acetolactate + NADPH + H(+). The catalysed reaction is (2R,3R)-2,3-dihydroxy-3-methylpentanoate + NADP(+) = (S)-2-ethyl-2-hydroxy-3-oxobutanoate + NADPH + H(+). Its pathway is amino-acid biosynthesis; L-isoleucine biosynthesis; L-isoleucine from 2-oxobutanoate: step 2/4. It functions in the pathway amino-acid biosynthesis; L-valine biosynthesis; L-valine from pyruvate: step 2/4. Involved in the biosynthesis of branched-chain amino acids (BCAA). Catalyzes an alkyl-migration followed by a ketol-acid reduction of (S)-2-acetolactate (S2AL) to yield (R)-2,3-dihydroxy-isovalerate. In the isomerase reaction, S2AL is rearranged via a Mg-dependent methyl migration to produce 3-hydroxy-3-methyl-2-ketobutyrate (HMKB). In the reductase reaction, this 2-ketoacid undergoes a metal-dependent reduction by NADPH to yield (R)-2,3-dihydroxy-isovalerate. The sequence is that of Ketol-acid reductoisomerase (NADP(+)) from Chlorobium phaeovibrioides (strain DSM 265 / 1930) (Prosthecochloris vibrioformis (strain DSM 265)).